The chain runs to 343 residues: Pentatricopeptide repeat-containing protein At1g06270 (343 aa).

PPR repeat units follow at residues 98 to 133 (PKIV…GCLP), 134 to 169 (NPQT…GYSP), 170 to 204 (DTGT…GCIP), 205 to 240 (DVES…GISP), 241 to 275 (RKGM…DYPV), and 276 to 310 (EFES…GFIP).

The protein belongs to the PPR family. P subfamily.

The protein is Pentatricopeptide repeat-containing protein At1g06270 of Arabidopsis thaliana (Mouse-ear cress).